A 196-amino-acid polypeptide reads, in one-letter code: Probable GTP-binding protein EngB (196 aa).

The 172-residue stretch at 22-193 folds into the EngB-type G domain; the sequence is SLPEVAFVGR…LEEIRKAKGE (172 aa). GTP is bound by residues 30-37, 57-61, 75-78, 142-145, and 172-174; these read GRSNVGKS, GRTQL, DLPG, TKSD, and FSA. Mg(2+) contacts are provided by Ser37 and Thr59.

The protein belongs to the TRAFAC class TrmE-Era-EngA-EngB-Septin-like GTPase superfamily. EngB GTPase family. Requires Mg(2+) as cofactor.

Functionally, necessary for normal cell division and for the maintenance of normal septation. The chain is Probable GTP-binding protein EngB from Syntrophus aciditrophicus (strain SB).